Consider the following 193-residue polypeptide: uncharacterized protein (193 aa).

Disordered regions lie at residues 1 to 67 and 110 to 160; these read MSGP…GPRS and QRTP…LPGS. Low complexity-rich tracts occupy residues 50 to 64 and 148 to 160; these read GPQR…ARPG and AGAS…LPGS.

This is an uncharacterized protein from Homo sapiens (Human).